Here is a 181-residue protein sequence, read N- to C-terminus: Large ribosomal subunit protein uL5c (181 aa).

Belongs to the universal ribosomal protein uL5 family. In terms of assembly, part of the 50S ribosomal subunit; contacts the 5S rRNA.

It is found in the plastid. Its subcellular location is the cyanelle. Functionally, binds 5S rRNA, forms part of the central protuberance of the 50S subunit. The protein is Large ribosomal subunit protein uL5c (rpl5) of Cyanophora paradoxa.